The primary structure comprises 334 residues: Glyceraldehyde-3-phosphate dehydrogenase 1 (334 aa).

NAD(+) is bound by residues 11-12 (RI), D33, R77, and S119. Residues 150 to 152 (SCT) and T181 each bind D-glyceraldehyde 3-phosphate. C151 functions as the Nucleophile in the catalytic mechanism. NAD(+) is bound at residue N182. D-glyceraldehyde 3-phosphate is bound by residues R196, 209-210 (TG), and R232. Residue N314 participates in NAD(+) binding.

This sequence belongs to the glyceraldehyde-3-phosphate dehydrogenase family. As to quaternary structure, homotetramer.

The protein resides in the cytoplasm. It carries out the reaction D-glyceraldehyde 3-phosphate + phosphate + NAD(+) = (2R)-3-phospho-glyceroyl phosphate + NADH + H(+). Its pathway is carbohydrate degradation; glycolysis; pyruvate from D-glyceraldehyde 3-phosphate: step 1/5. Functionally, catalyzes the oxidative phosphorylation of glyceraldehyde 3-phosphate (G3P) to 1,3-bisphosphoglycerate (BPG) using the cofactor NAD. The first reaction step involves the formation of a hemiacetal intermediate between G3P and a cysteine residue, and this hemiacetal intermediate is then oxidized to a thioester, with concomitant reduction of NAD to NADH. The reduced NADH is then exchanged with the second NAD, and the thioester is attacked by a nucleophilic inorganic phosphate to produce BPG. The polypeptide is Glyceraldehyde-3-phosphate dehydrogenase 1 (gap1) (Bacillus cereus).